A 560-amino-acid chain; its full sequence is uncharacterized protein (560 aa).

Residues M1–Q17 lie on the Cytoplasmic side of the membrane. The chain crosses the membrane as a helical span at residues F18 to T38. Residues V39–S54 lie on the Extracellular side of the membrane. The chain crosses the membrane as a helical span at residues L55 to V75. Topologically, residues D76 to S88 are cytoplasmic. A helical transmembrane segment spans residues W89–S109. Residues Q110–W139 lie on the Extracellular side of the membrane. A helical transmembrane segment spans residues W140 to L160. Residues T161–S172 are Cytoplasmic-facing. Residues T173–L193 traverse the membrane as a helical segment. The Extracellular segment spans residues N194–S214. Residues L215–F235 traverse the membrane as a helical segment. Residues C236–E329 lie on the Cytoplasmic side of the membrane. Residues D330–V350 traverse the membrane as a helical segment. Residues K351–K374 are Extracellular-facing. The helical transmembrane segment at V375 to G395 threads the bilayer. Residues R396–F421 are Cytoplasmic-facing. Residues C422–I442 traverse the membrane as a helical segment. Residues S443 to D521 lie on the Extracellular side of the membrane. A helical membrane pass occupies residues G522 to L542. Topologically, residues K543 to T560 are cytoplasmic.

Its subcellular location is the membrane. This is an uncharacterized protein from Saccharomyces cerevisiae (strain ATCC 204508 / S288c) (Baker's yeast).